The sequence spans 262 residues: Acyl-[acyl-carrier-protein]--UDP-N-acetylglucosamine O-acyltransferase (262 aa).

Belongs to the transferase hexapeptide repeat family. LpxA subfamily. Homotrimer.

The protein resides in the cytoplasm. The enzyme catalyses a (3R)-hydroxyacyl-[ACP] + UDP-N-acetyl-alpha-D-glucosamine = a UDP-3-O-[(3R)-3-hydroxyacyl]-N-acetyl-alpha-D-glucosamine + holo-[ACP]. It participates in glycolipid biosynthesis; lipid IV(A) biosynthesis; lipid IV(A) from (3R)-3-hydroxytetradecanoyl-[acyl-carrier-protein] and UDP-N-acetyl-alpha-D-glucosamine: step 1/6. Its function is as follows. Involved in the biosynthesis of lipid A, a phosphorylated glycolipid that anchors the lipopolysaccharide to the outer membrane of the cell. The sequence is that of Acyl-[acyl-carrier-protein]--UDP-N-acetylglucosamine O-acyltransferase from Shigella boydii serotype 18 (strain CDC 3083-94 / BS512).